We begin with the raw amino-acid sequence, 177 residues long: Translationally-controlled tumor protein homolog (177 aa).

In terms of domain architecture, TCTP spans 1–177 (MIIYRDLFSG…IKQGLVVEKC (177 aa)).

It belongs to the TCTP family.

Its subcellular location is the cytoplasm. In terms of biological role, involved in calcium binding and microtubule stabilization. This Trichinella pseudospiralis (Parasitic roundworm) protein is Translationally-controlled tumor protein homolog.